A 286-amino-acid chain; its full sequence is ATP phosphoribosyltransferase (286 aa).

It belongs to the ATP phosphoribosyltransferase family. Long subfamily. Requires Mg(2+) as cofactor.

It is found in the cytoplasm. The enzyme catalyses 1-(5-phospho-beta-D-ribosyl)-ATP + diphosphate = 5-phospho-alpha-D-ribose 1-diphosphate + ATP. It functions in the pathway amino-acid biosynthesis; L-histidine biosynthesis; L-histidine from 5-phospho-alpha-D-ribose 1-diphosphate: step 1/9. Its activity is regulated as follows. Feedback inhibited by histidine. Its function is as follows. Catalyzes the condensation of ATP and 5-phosphoribose 1-diphosphate to form N'-(5'-phosphoribosyl)-ATP (PR-ATP). Has a crucial role in the pathway because the rate of histidine biosynthesis seems to be controlled primarily by regulation of HisG enzymatic activity. The chain is ATP phosphoribosyltransferase from Cytophaga hutchinsonii (strain ATCC 33406 / DSM 1761 / CIP 103989 / NBRC 15051 / NCIMB 9469 / D465).